Reading from the N-terminus, the 202-residue chain is Syndecan-4 (202 aa).

Residues 1–22 form the signal peptide; the sequence is MASPRLLALLLLLVGAFNAAAA. Over 23–152 the chain is Extracellular; that stretch reads ESIRETEVIN…NIFERTEVLS (130 aa). 2 disordered regions span residues 41–75 and 87–112; these read YFSGDLPDDEDVGGPGQEPDDFEWSGSGDLEGPED and VPLDNHIPERTGPGGRVPTEPKELEE. Residue S43 is glycosylated (O-linked (Xyl...) (glycosaminoglycan) serine). The segment covering 46–63 has biased composition (acidic residues); that stretch reads LPDDEDVGGPGQEPDDFE. O-linked (Xyl...) (glycosaminoglycan) serine glycosylation is found at S65 and S67. A helical membrane pass occupies residues 153–173; it reads ALIVGGIVGILFAVFLVLLLV. The Cytoplasmic portion of the chain corresponds to 174–202; sequence YRMKKKDEGSYDLGKKPIYKKAPTNEFYA.

It belongs to the syndecan proteoglycan family. In terms of assembly, homodimer. Interacts with CDCP1 and SDCBP. Interacts (via its cytoplasmic domain) with GIPC (via its PDZ domain). Interacts (via its cytoplasmic domain) with NUDT16L1. Interacts with DNM2; this interaction is markedly enhanced at focal ahesion site upon induction of focal adhesions and stress-fiber formation. Shedding, cleavage of the extracellular domain to release a soluble form, is enhanced by a number of factors such as heparanase, growth factor receptor action for example by thrombin or EGF. Physiological events such as stress or wound healing can activate the shedding. PMA-mediated shedding is inhibited by TIMP3. In terms of processing, O-glycosylated; contains both chondroitin sulfate and heparan sulfate. Ser-43, Ser-65 and Ser-67 can all be modified by either chondroitin sulfate or heparan sulfate, and the protein exists in forms that contain only chondroitin sulfate, only heparan sulfate and both chondroitin sulfate and heparan sulfate.

It is found in the membrane. It localises to the secreted. Functionally, cell surface proteoglycan which regulates exosome biogenesis in concert with SDCBP and PDCD6IP. This chain is Syndecan-4, found in Sus scrofa (Pig).